The following is a 347-amino-acid chain: NADH-quinone oxidoreductase subunit H (347 aa).

8 helical membrane-spanning segments follow: residues 14–34 (IMIGQSLLLLVCLLVFIAYIL), 82–102 (AVFLLAPLVAVTLALATWAVI), 115–135 (VGILYVFAISSLEVYGIIMGG), 161–181 (IGFVIVTVLLCAGSLNLTDIV), 198–218 (LLDWHWLSLFPMFVIFFISAL), 258–278 (AIVLMCALTTILFLGGWLPPL), 285–305 (WVPGIIWFILKATLVFFMFGI), and 321–341 (LGWKVFLPLSLAMVVIVAFVL).

It belongs to the complex I subunit 1 family. As to quaternary structure, NDH-1 is composed of 14 different subunits. Subunits NuoA, H, J, K, L, M, N constitute the membrane sector of the complex.

It is found in the cell inner membrane. It catalyses the reaction a quinone + NADH + 5 H(+)(in) = a quinol + NAD(+) + 4 H(+)(out). Its function is as follows. NDH-1 shuttles electrons from NADH, via FMN and iron-sulfur (Fe-S) centers, to quinones in the respiratory chain. The immediate electron acceptor for the enzyme in this species is believed to be ubiquinone. Couples the redox reaction to proton translocation (for every two electrons transferred, four hydrogen ions are translocated across the cytoplasmic membrane), and thus conserves the redox energy in a proton gradient. This subunit may bind ubiquinone. The sequence is that of NADH-quinone oxidoreductase subunit H from Allorhizobium ampelinum (strain ATCC BAA-846 / DSM 112012 / S4) (Agrobacterium vitis (strain S4)).